The sequence spans 351 residues: Methionine import ATP-binding protein MetN (351 aa).

An ABC transporter domain is found at 2 to 247; sequence ITTSGLTKVY…PGSELAAALF (246 aa). 38–45 is an ATP binding site; the sequence is GQSGAGKS.

Belongs to the ABC transporter superfamily. Methionine importer (TC 3.A.1.24) family. In terms of assembly, the complex is composed of two ATP-binding proteins (MetN), two transmembrane proteins (MetI) and a solute-binding protein (MetQ).

It is found in the cell membrane. The enzyme catalyses L-methionine(out) + ATP + H2O = L-methionine(in) + ADP + phosphate + H(+). It catalyses the reaction D-methionine(out) + ATP + H2O = D-methionine(in) + ADP + phosphate + H(+). Part of the ABC transporter complex MetNIQ involved in methionine import. Responsible for energy coupling to the transport system. The polypeptide is Methionine import ATP-binding protein MetN (Streptomyces coelicolor (strain ATCC BAA-471 / A3(2) / M145)).